Reading from the N-terminus, the 381-residue chain is NF-kappa-B inhibitor-like protein 1 (381 aa).

The disordered stretch occupies residues 1–34 (MSNPSPQVPEEEASTSVCRPKSSMASTSRRQRRE). ANK repeat units follow at residues 64-93 (GQPP…DPAH) and 97-130 (HGDT…AMGI). Disordered stretches follow at residues 129 to 167 (GIKN…EWRQ) and 186 to 294 (GDAS…RGSL). S150 is subject to Phosphoserine. Residues 150 to 159 (SAEEEEEDDA) show a composition bias toward acidic residues. Basic and acidic residues-rich tracts occupy residues 218–228 (REAEGSRRPPR) and 238–287 (QQEE…EHPR).

Interacts with CACTIN (via N-terminal domain); the interaction occurs in a proinflammatory-independent manner. In terms of tissue distribution, detected in different cell types including monocytes, T-cells, B-cells and hepatocytes.

It localises to the nucleus. Functionally, involved in the regulation of innate immune response. Acts as negative regulator of Toll-like receptor and interferon-regulatory factor (IRF) signaling pathways. Contributes to the negative regulation of transcriptional activation of NF-kappa-B target genes in response to endogenous proinflammatory stimuli. The protein is NF-kappa-B inhibitor-like protein 1 (NFKBIL1) of Homo sapiens (Human).